Consider the following 309-residue polypeptide: tRNA dimethylallyltransferase (309 aa).

15–22 serves as a coordination point for ATP; sequence GPTASGKS. 17–22 contacts substrate; it reads TASGKS. Positions 40 to 43 are interaction with substrate tRNA; the sequence is DSRQ.

This sequence belongs to the IPP transferase family. In terms of assembly, monomer. Requires Mg(2+) as cofactor.

The catalysed reaction is adenosine(37) in tRNA + dimethylallyl diphosphate = N(6)-dimethylallyladenosine(37) in tRNA + diphosphate. Functionally, catalyzes the transfer of a dimethylallyl group onto the adenine at position 37 in tRNAs that read codons beginning with uridine, leading to the formation of N6-(dimethylallyl)adenosine (i(6)A). The polypeptide is tRNA dimethylallyltransferase (Chlorobium phaeovibrioides (strain DSM 265 / 1930) (Prosthecochloris vibrioformis (strain DSM 265))).